A 432-amino-acid polypeptide reads, in one-letter code: UPF0761 membrane protein Cag_0935 (432 aa).

6 helical membrane passes run 52-72 (LLSI…FEVF), 108-128 (NIPL…LSTV), 148-168 (FTLY…SLAA), 190-210 (LLAL…YMLV), 220-240 (AFAG…WFLF), and 254-274 (ALSV…VVLV).

It belongs to the UPF0761 family.

Its subcellular location is the cell inner membrane. This Chlorobium chlorochromatii (strain CaD3) protein is UPF0761 membrane protein Cag_0935.